A 263-amino-acid chain; its full sequence is tRNA1(Val) (adenine(37)-N6)-methyltransferase (263 aa).

The protein belongs to the methyltransferase superfamily. tRNA (adenine-N(6)-)-methyltransferase family.

It localises to the cytoplasm. It carries out the reaction adenosine(37) in tRNA1(Val) + S-adenosyl-L-methionine = N(6)-methyladenosine(37) in tRNA1(Val) + S-adenosyl-L-homocysteine + H(+). Specifically methylates the adenine in position 37 of tRNA(1)(Val) (anticodon cmo5UAC). This is tRNA1(Val) (adenine(37)-N6)-methyltransferase from Salmonella choleraesuis (strain SC-B67).